The primary structure comprises 316 residues: Ribosomal protein L11 methyltransferase (316 aa).

S-adenosyl-L-methionine-binding residues include Thr157, Gly178, Asp200, and Asn243.

Belongs to the methyltransferase superfamily. PrmA family.

Its subcellular location is the cytoplasm. The enzyme catalyses L-lysyl-[protein] + 3 S-adenosyl-L-methionine = N(6),N(6),N(6)-trimethyl-L-lysyl-[protein] + 3 S-adenosyl-L-homocysteine + 3 H(+). In terms of biological role, methylates ribosomal protein L11. The sequence is that of Ribosomal protein L11 methyltransferase from Streptococcus pneumoniae (strain ATCC 700669 / Spain 23F-1).